The primary structure comprises 736 residues: Myosin-7 (736 aa).

Residues 1–342 (NWMVTRINAT…LLGLLEEMRD (342 aa)) form the Myosin motor domain. Positions 219–241 (LNKLMTNLRSTHPHFVRCIIPNE) are actin-binding. An IQ domain is found at 345 to 374 (LSRIITRIQAQSRGVLSRMEYKKLLERRDS). A coiled-coil region spans residues 403 to 736 (LLKSAETEKE…MNKKREAEFQ (334 aa)). A Phosphoserine modification is found at serine 701. Positions 716-736 (EAGGATSVQIEMNKKREAEFQ) are disordered. Residues 727–736 (MNKKREAEFQ) show a composition bias toward basic and acidic residues.

The protein belongs to the TRAFAC class myosin-kinesin ATPase superfamily. Myosin family. In terms of assembly, muscle myosin is a hexameric protein that consists of 2 heavy chain subunits (MHC), 2 alkali light chain subunits (MLC) and 2 regulatory light chain subunits (MLC-2). Interacts with ECPAS. Interacts (via C-terminus) with LRRC39.

The protein localises to the cytoplasm. Its subcellular location is the myofibril. It localises to the sarcomere. Its function is as follows. Myosins are actin-based motor molecules with ATPase activity essential for muscle contraction. Forms regular bipolar thick filaments that, together with actin thin filaments, constitute the fundamental contractile unit of skeletal and cardiac muscle. This chain is Myosin-7 (MYH7), found in Oryctolagus cuniculus (Rabbit).